The following is a 464-amino-acid chain: Fumarate hydratase class II (464 aa).

Substrate-binding positions include 98–100 (SGT), 129–132 (HPND), 139–141 (SSN), and threonine 187. Catalysis depends on histidine 188, which acts as the Proton donor/acceptor. The active site involves serine 318. Substrate-binding positions include serine 319 and 324–326 (KVN).

This sequence belongs to the class-II fumarase/aspartase family. Fumarase subfamily. In terms of assembly, homotetramer.

The protein localises to the cytoplasm. The enzyme catalyses (S)-malate = fumarate + H2O. Its pathway is carbohydrate metabolism; tricarboxylic acid cycle; (S)-malate from fumarate: step 1/1. In terms of biological role, involved in the TCA cycle. Catalyzes the stereospecific interconversion of fumarate to L-malate. This chain is Fumarate hydratase class II, found in Wigglesworthia glossinidia brevipalpis.